A 105-amino-acid chain; its full sequence is Large ribosomal subunit protein uL23 (105 aa).

The protein belongs to the universal ribosomal protein uL23 family. In terms of assembly, part of the 50S ribosomal subunit. Contacts protein L29, and trigger factor when it is bound to the ribosome.

One of the early assembly proteins it binds 23S rRNA. One of the proteins that surrounds the polypeptide exit tunnel on the outside of the ribosome. Forms the main docking site for trigger factor binding to the ribosome. The sequence is that of Large ribosomal subunit protein uL23 from Chloroherpeton thalassium (strain ATCC 35110 / GB-78).